We begin with the raw amino-acid sequence, 295 residues long: (R)-phenoxypropionate/alpha-ketoglutarate-dioxygenase (295 aa).

The Fe cation site is built by His111 and Asp113. Residues Thr138 and Trp255 each coordinate 2-oxoglutarate. His270 is a binding site for Fe cation. Residue Arg281 coordinates 2-oxoglutarate.

It belongs to the TfdA dioxygenase family. Homotrimer. Fe cation is required as a cofactor. Requires L-ascorbate as cofactor.

The enzyme catalyses (R)-2-(4-chloro-2-methylphenoxy)propanoate + 2-oxoglutarate + O2 = 2-methyl-4-chlorophenol + pyruvate + succinate + CO2. The catalysed reaction is (R)-(2,4-dichlorophenoxy)propanoate + 2-oxoglutarate + O2 = 2,4-dichlorophenol + pyruvate + succinate + CO2. It functions in the pathway xenobiotic degradation; 2-(2,4-dichlorophenoxy)propanoate degradation. Its activity is regulated as follows. Inhibited by divalent cations, most significantly by copper and nickel, and by diethylpyrocarbonate (DEPC). In terms of biological role, involved in the degradation of the phenoxypropionate herbicides. Catalyzes the enantiospecific cleavage of the ether bond in the herbicid R-dichlorprop ((R)-2-(2,4-dichlorophenoxy)propionate)(R-2,4-DP) and R-mecoprop ((R)-2-(4-chloro-2-methylphenoxy)propionate)(R-2,4-MCPP). It can also accept (RS)-2-(2,4,5-trichlorophenoxy)propionate, (RS)-2-(4-chlorophenoxy)propionate, (RS)-2-(m-chlorophenoxy)propionate, however it can only accept 2-oxoglutarate as oxygen acceptor. This chain is (R)-phenoxypropionate/alpha-ketoglutarate-dioxygenase, found in Delftia acidovorans (Pseudomonas acidovorans).